The chain runs to 306 residues: ATP phosphoribosyltransferase (306 aa).

This sequence belongs to the ATP phosphoribosyltransferase family.

The protein localises to the cytoplasm. The catalysed reaction is 1-(5-phospho-beta-D-ribosyl)-ATP + diphosphate = 5-phospho-alpha-D-ribose 1-diphosphate + ATP. It participates in amino-acid biosynthesis; L-histidine biosynthesis; L-histidine from 5-phospho-alpha-D-ribose 1-diphosphate: step 1/9. Functionally, catalyzes the condensation of ATP and 5-phosphoribose 1-diphosphate to form N'-(5'-phosphoribosyl)-ATP (PR-ATP). Has a crucial role in the pathway because the rate of histidine biosynthesis seems to be controlled primarily by regulation of the enzymatic activity. This chain is ATP phosphoribosyltransferase (HIS1), found in Candida glabrata (strain ATCC 2001 / BCRC 20586 / JCM 3761 / NBRC 0622 / NRRL Y-65 / CBS 138) (Yeast).